We begin with the raw amino-acid sequence, 394 residues long: NADH-quinone oxidoreductase subunit D 2 (394 aa).

Belongs to the complex I 49 kDa subunit family. As to quaternary structure, NDH-1 is composed of 14 different subunits. Subunits NuoB, C, D, E, F, and G constitute the peripheral sector of the complex.

It is found in the cell membrane. It catalyses the reaction a quinone + NADH + 5 H(+)(in) = a quinol + NAD(+) + 4 H(+)(out). In terms of biological role, NDH-1 shuttles electrons from NADH, via FMN and iron-sulfur (Fe-S) centers, to quinones in the respiratory chain. The immediate electron acceptor for the enzyme in this species is believed to be a menaquinone. Couples the redox reaction to proton translocation (for every two electrons transferred, four hydrogen ions are translocated across the cytoplasmic membrane), and thus conserves the redox energy in a proton gradient. The protein is NADH-quinone oxidoreductase subunit D 2 of Streptomyces griseus subsp. griseus (strain JCM 4626 / CBS 651.72 / NBRC 13350 / KCC S-0626 / ISP 5235).